Here is a 537-residue protein sequence, read N- to C-terminus: uncharacterized protein (537 aa).

This is an uncharacterized protein from Bacillus subtilis (strain 168).